We begin with the raw amino-acid sequence, 239 residues long: Purine nucleoside phosphorylase DeoD-type (239 aa).

Position 5 (His-5) interacts with a purine D-ribonucleoside. Phosphate is bound by residues Gly-21, Arg-25, Arg-44, and 88–91 (RVGS). A purine D-ribonucleoside contacts are provided by residues 180–182 (EME) and 204–205 (SD). The active-site Proton donor is the Asp-205.

Belongs to the PNP/UDP phosphorylase family. As to quaternary structure, homohexamer; trimer of homodimers.

It catalyses the reaction a purine D-ribonucleoside + phosphate = a purine nucleobase + alpha-D-ribose 1-phosphate. The catalysed reaction is a purine 2'-deoxy-D-ribonucleoside + phosphate = a purine nucleobase + 2-deoxy-alpha-D-ribose 1-phosphate. In terms of biological role, catalyzes the reversible phosphorolytic breakdown of the N-glycosidic bond in the beta-(deoxy)ribonucleoside molecules, with the formation of the corresponding free purine bases and pentose-1-phosphate. This is Purine nucleoside phosphorylase DeoD-type from Yersinia pseudotuberculosis serotype O:1b (strain IP 31758).